Reading from the N-terminus, the 586-residue chain is Eukaryotic translation initiation factor 2A (586 aa).

WD repeat units follow at residues 23–63 (PSFT…NIVN), 125–163 (QKKM…TIAN), and 356–401 (VASD…HNYE). The segment at 434–531 (ELPSAEPKPA…SAVPVVTSGD (98 aa)) is disordered. Over residues 470–479 (MKPQSGSSEK) the composition is skewed to polar residues. Basic and acidic residues predominate over residues 495-506 (KKAAKQEAKADC). The segment covering 507–521 (SQESTQSSASQNTPR) has biased composition (polar residues). A coiled-coil region spans residues 532 to 583 (PEIDKKIKNLKKKLKAIEQLKEQAAAGKQLEKNQLEKIQKESALLQELEDLE).

This sequence belongs to the WD repeat EIF2A family.

Functions in the early steps of protein synthesis of a small number of specific mRNAs. Acts by directing the binding of methionyl-tRNAi to 40S ribosomal subunits. In contrast to the eIF-2 complex, it binds methionyl-tRNAi to 40S subunits in a codon-dependent manner, whereas the eIF-2 complex binds methionyl-tRNAi to 40S subunits in a GTP-dependent manner. This Gallus gallus (Chicken) protein is Eukaryotic translation initiation factor 2A (EIF2A).